The chain runs to 102 residues: UPF0213 protein Ent638_3592 (102 aa).

The region spanning 4–79 (VCWFLYLVRT…KQLTKRQKER (76 aa)) is the GIY-YIG domain.

It belongs to the UPF0213 family.

The sequence is that of UPF0213 protein Ent638_3592 from Enterobacter sp. (strain 638).